The following is an 81-amino-acid chain: Photosystem I iron-sulfur center (81 aa).

4Fe-4S ferredoxin-type domains lie at 2 to 31 and 37 to 68; these read SHSV…MVPW and GQIA…IRVY. Positions 11, 14, 17, 21, 48, 51, 54, and 58 each coordinate [4Fe-4S] cluster.

The cyanobacterial PSI reaction center is composed of one copy each of PsaA,B,C,D,E,F,I,J,K,L,M and X, and forms trimeric complexes. It depends on [4Fe-4S] cluster as a cofactor.

The protein resides in the cellular thylakoid membrane. The enzyme catalyses reduced [plastocyanin] + hnu + oxidized [2Fe-2S]-[ferredoxin] = oxidized [plastocyanin] + reduced [2Fe-2S]-[ferredoxin]. Functionally, apoprotein for the two 4Fe-4S centers FA and FB of photosystem I (PSI); essential for photochemical activity. FB is the terminal electron acceptor of PSI, donating electrons to ferredoxin. The C-terminus interacts with PsaA/B/D and helps assemble the protein into the PSI complex. Required for binding of PsaD and PsaE to PSI. PSI is a plastocyanin/cytochrome c6-ferredoxin oxidoreductase, converting photonic excitation into a charge separation, which transfers an electron from the donor P700 chlorophyll pair to the spectroscopically characterized acceptors A0, A1, FX, FA and FB in turn. Mutant proteins with a 3Fe-4S center are not observed bound to PSI in vitro, and are probably not able to do so in vivo. In Picosynechococcus sp. (strain ATCC 27264 / PCC 7002 / PR-6) (Agmenellum quadruplicatum), this protein is Photosystem I iron-sulfur center (psaC).